The primary structure comprises 281 residues: Probable feruloyl esterase A (281 aa).

The signal sequence occupies residues 1-21 (MKQFSAKFALALSAAAGQALA). 3 cysteine pairs are disulfide-bonded: cysteine 50/cysteine 279, cysteine 112/cysteine 115, and cysteine 248/cysteine 255. Aspartate 98 contacts substrate. N-linked (GlcNAc...) asparagine glycosylation occurs at asparagine 100. Tyrosine 101 lines the substrate pocket. The active-site Nucleophile is the serine 154. N-linked (GlcNAc...) asparagine glycosylation is present at asparagine 173. The active-site Charge relay system is the aspartate 215. Histidine 268 provides a ligand contact to substrate. The active-site Charge relay system is the histidine 268.

Belongs to the AB hydrolase superfamily. FaeA family.

Its subcellular location is the secreted. The enzyme catalyses feruloyl-polysaccharide + H2O = ferulate + polysaccharide.. In terms of biological role, involved in degradation of plant cell walls. Hydrolyzes the feruloyl-arabinose ester bond in arabinoxylans, and the feruloyl-galactose ester bond in pectin. The chain is Probable feruloyl esterase A (faeA) from Aspergillus terreus (strain NIH 2624 / FGSC A1156).